The chain runs to 258 residues: UPF0246 protein YaaA (258 aa).

Belongs to the UPF0246 family.

The protein is UPF0246 protein YaaA of Escherichia coli (strain 55989 / EAEC).